The primary structure comprises 80 residues: Cytochrome c oxidase subunit 7A1, mitochondrial (80 aa).

The transit peptide at 1–21 (MLAPRVSQALIRSFSSTARNR) directs the protein to the mitochondrion. At 22 to 46 (LKNRVPEKQKLFQEDNGIPVYLKGG) the chain is on the mitochondrial matrix side. The helical transmembrane segment at 47 to 75 (VVDHILYRVTMGLCLGGTAYGVYCLAWAS) threads the bilayer. At 76–80 (FPRNK) the chain is on the mitochondrial intermembrane side.

Belongs to the cytochrome c oxidase VIIa family. Component of the complex IV (CIV, cytochrome c oxidase), a multisubunit enzyme composed of 14 subunits. The complex is composed of a catalytic core of 3 subunits MT-CO1, MT-CO2 and MT-CO3, encoded in the mitochondrial DNA, and 11 supernumerary subunits COX4I1 (or COX4I2), COX5A, COX5B, COX6A2 (or COX6A1), COX6B1 (or COX6B2), COX6C, COX7A1 (or COX7A2), COX7B, COX7C, COX8B and NDUFA4, which are encoded in the nuclear genome. The complex exists as a monomer or a dimer and forms supercomplexes (SCs) in the inner mitochondrial membrane with NADH-ubiquinone oxidoreductase (complex I, CI) and ubiquinol-cytochrome c oxidoreductase (cytochrome b-c1 complex, complex III, CIII), resulting in different assemblies (supercomplex SCI(1)III(2)IV(1) and megacomplex MCI(2)III(2)IV(2)).

The protein resides in the mitochondrion inner membrane. It participates in energy metabolism; oxidative phosphorylation. Component of the mitochondrial respiratory complex IV (CIV, also named cytochrome c oxidase complex), the last enzyme in the mitochondrial electron transport chain which drives oxidative phosphorylation. The CIV complex is the component of the respiratory chain that catalyzes the reduction of oxygen to water. Acts as an assembly factor that specifically drives the homodimerization of CIV complexes, mediating the formation of mitochondrial respiratory supercomplexes (respirasomes) containing two CIV: supercomplxes with two molecules of CIV show improved activity. Despite being highly expressed in brown adipose tissue, not required for thermogenesis. The sequence is that of Cytochrome c oxidase subunit 7A1, mitochondrial (COX7A1) from Saimiri sciureus (Common squirrel monkey).